Here is a 234-residue protein sequence, read N- to C-terminus: Protein-toxin resistance protein KTD1 (234 aa).

Residues 1 to 47 (MQTPSENTDVKMDTLDEPSAHLIEENVALPEDTFSSHLSYVLYEIAH) lie on the Cytoplasmic side of the membrane. Residues 48–68 (CKPIMFMIIIIVSLISLIVLF) form a helical membrane-spanning segment. The interval 68–75 (FHDNDGCT) is required for resistance to killer toxin K28, a protein-toxin encoded by the M28 virus. Residues 69-76 (HDNDGCTV) are Extracellular-facing. A helical membrane pass occupies residues 77–97 (ILVMSLIVASMALMVVAAFTF). Topologically, residues 98–234 (GKAITEQEFM…RKQYPDADLP (137 aa)) are cytoplasmic. The interval 147–234 (FYSGKKCHEF…RKQYPDADLP (88 aa)) is required for resistance to killer toxin K28, a protein-toxin encoded by the M28 virus. Residues 168–187 (SHSDSSSNSAEDTQSPVSAG) form a disordered region. A compositionally biased stretch (polar residues) spans 177–187 (AEDTQSPVSAG). Lys-217 participates in a covalent cross-link: Glycyl lysine isopeptide (Lys-Gly) (interchain with G-Cter in ubiquitin).

It belongs to the DUP/COS family.

The protein localises to the vacuole membrane. It is found in the golgi apparatus. It localises to the trans-Golgi network membrane. Its subcellular location is the endosome membrane. Its function is as follows. Confers resistance to killer toxin K28, a protein-toxin encoded by the M28 virus that uses S.cerevisiae as a host. Probably acts against K28 after endocytosis of the protein-toxin. The sequence is that of Protein-toxin resistance protein KTD1 from Saccharomyces cerevisiae (strain ATCC 204508 / S288c) (Baker's yeast).